Reading from the N-terminus, the 132-residue chain is Protein p15 (132 aa).

May play a role in infectivity. The protein is Protein p15 of Panicum mosaic virus (strain United States/Kansas 109S) (PMV).